Reading from the N-terminus, the 215-residue chain is Riboflavin synthase (215 aa).

Lumazine-binding repeat units lie at residues 1-96 (MFTG…FGGH) and 97-193 (IVSG…EQFL). 2,4-dihydroxypteridine is bound by residues 4-6 (GII), 47-49 (CLT), 61-66 (DVMSET), 100-102 (GHI), Lys135, 144-146 (SLT), and 158-163 (SIIPHT).

Homotrimer.

It catalyses the reaction 2 6,7-dimethyl-8-(1-D-ribityl)lumazine + H(+) = 5-amino-6-(D-ribitylamino)uracil + riboflavin. It functions in the pathway cofactor biosynthesis; riboflavin biosynthesis; riboflavin from 2-hydroxy-3-oxobutyl phosphate and 5-amino-6-(D-ribitylamino)uracil: step 2/2. In terms of biological role, catalyzes the dismutation of two molecules of 6,7-dimethyl-8-ribityllumazine, resulting in the formation of riboflavin and 5-amino-6-(D-ribitylamino)uracil. The chain is Riboflavin synthase (ribE) from Actinobacillus pleuropneumoniae (Haemophilus pleuropneumoniae).